A 356-amino-acid chain; its full sequence is 5-amino-6-(D-ribitylamino)uracil--L-tyrosine 4-hydroxyphenyl transferase (356 aa).

The Radical SAM core domain maps to 47–281 (VTYIVNRNIN…AIARILLNTH (235 aa)). 3 residues coordinate [4Fe-4S] cluster: cysteine 61, cysteine 65, and cysteine 68.

The protein belongs to the radical SAM superfamily. CofH family. Consists of two subunits, CofG and CofH. The cofactor is [4Fe-4S] cluster.

The enzyme catalyses 5-amino-6-(D-ribitylamino)uracil + L-tyrosine + S-adenosyl-L-methionine = 5-amino-5-(4-hydroxybenzyl)-6-(D-ribitylimino)-5,6-dihydrouracil + 2-iminoacetate + 5'-deoxyadenosine + L-methionine + H(+). Its pathway is cofactor biosynthesis; coenzyme F0 biosynthesis. Functionally, catalyzes the radical-mediated synthesis of 5-amino-5-(4-hydroxybenzyl)-6-(D-ribitylimino)-5,6-dihydrouracil from 5-amino-6-(D-ribitylamino)uracil and L-tyrosine. The chain is 5-amino-6-(D-ribitylamino)uracil--L-tyrosine 4-hydroxyphenyl transferase from Methanococcoides burtonii (strain DSM 6242 / NBRC 107633 / OCM 468 / ACE-M).